The chain runs to 240 residues: MKALVSGIVDLSTIDYPKKASAVIFLYGCNMKCPYCHNLKFMLEHKRGMTVEEIFNDIDFLFADAIVISGGEPTLQKDAVIEIARYAKEKGFPVKIDTNGTHPEVIEELIKNKLIDYVAIDVKCRFDKYKEFVKCREDGEEIKNKILKIIDLCKKNNVFVECRTTFVPKVMDEEDIEDIAKTVKDCDLYAIQQFEPKDAYDEEFKKLPMPKENELRELGKIAKKYIDNVVIRTINGTFEI.

The Radical SAM core domain occupies Ile14–Arg232. [4Fe-4S] cluster-binding residues include Cys29, Cys33, and Cys36. Residues Tyr35–His37, Gly71, and Phe126–Lys128 each bind S-adenosyl-L-methionine.

Belongs to the organic radical-activating enzymes family. The cofactor is [4Fe-4S] cluster.

The catalysed reaction is glycyl-[protein] + reduced [flavodoxin] + S-adenosyl-L-methionine = glycin-2-yl radical-[protein] + semiquinone [flavodoxin] + 5'-deoxyadenosine + L-methionine + H(+). The polypeptide is Putative glycyl-radical enzyme activating enzyme MJ1227 (Methanocaldococcus jannaschii (strain ATCC 43067 / DSM 2661 / JAL-1 / JCM 10045 / NBRC 100440) (Methanococcus jannaschii)).